A 317-amino-acid chain; its full sequence is Acetyl-coenzyme A carboxylase carboxyl transferase subunit alpha (317 aa).

Positions 39-293 (RLKKKSISLT…KTSLAQGVAE (255 aa)) constitute a CoA carboxyltransferase C-terminal domain.

Belongs to the AccA family. In terms of assembly, acetyl-CoA carboxylase is a heterohexamer composed of biotin carboxyl carrier protein (AccB), biotin carboxylase (AccC) and two subunits each of ACCase subunit alpha (AccA) and ACCase subunit beta (AccD).

It is found in the cytoplasm. The catalysed reaction is N(6)-carboxybiotinyl-L-lysyl-[protein] + acetyl-CoA = N(6)-biotinyl-L-lysyl-[protein] + malonyl-CoA. Its pathway is lipid metabolism; malonyl-CoA biosynthesis; malonyl-CoA from acetyl-CoA: step 1/1. Its function is as follows. Component of the acetyl coenzyme A carboxylase (ACC) complex. First, biotin carboxylase catalyzes the carboxylation of biotin on its carrier protein (BCCP) and then the CO(2) group is transferred by the carboxyltransferase to acetyl-CoA to form malonyl-CoA. In Marinobacter nauticus (strain ATCC 700491 / DSM 11845 / VT8) (Marinobacter aquaeolei), this protein is Acetyl-coenzyme A carboxylase carboxyl transferase subunit alpha.